Consider the following 514-residue polypeptide: Membrane-bound lytic murein transglycosylase F (514 aa).

A signal peptide spans 1–30; that stretch reads MKKLKINYLFIGILTLLLAAALWPSIPWFG. The tract at residues 31–269 is non-LT domain; the sequence is KTENHIAAIQ…RIEEKYLGHG (239 aa). The interval 270–514 is LT domain; it reads DDFDYVDTRS…LFTPQKKEEK (245 aa). Residue E314 is part of the active site.

The protein in the N-terminal section; belongs to the bacterial solute-binding protein 3 family. This sequence in the C-terminal section; belongs to the transglycosylase Slt family.

The protein resides in the cell outer membrane. It catalyses the reaction Exolytic cleavage of the (1-&gt;4)-beta-glycosidic linkage between N-acetylmuramic acid (MurNAc) and N-acetylglucosamine (GlcNAc) residues in peptidoglycan, from either the reducing or the non-reducing ends of the peptidoglycan chains, with concomitant formation of a 1,6-anhydrobond in the MurNAc residue.. In terms of biological role, murein-degrading enzyme that degrades murein glycan strands and insoluble, high-molecular weight murein sacculi, with the concomitant formation of a 1,6-anhydromuramoyl product. Lytic transglycosylases (LTs) play an integral role in the metabolism of the peptidoglycan (PG) sacculus. Their lytic action creates space within the PG sacculus to allow for its expansion as well as for the insertion of various structures such as secretion systems and flagella. This is Membrane-bound lytic murein transglycosylase F from Salmonella typhimurium (strain LT2 / SGSC1412 / ATCC 700720).